Reading from the N-terminus, the 339-residue chain is RNA 3'-terminal phosphate cyclase (339 aa).

ATP is bound by residues Gln103 and 283–287; that span reads HLADQ. Catalysis depends on His308, which acts as the Tele-AMP-histidine intermediate.

Belongs to the RNA 3'-terminal cyclase family. Type 1 subfamily.

It localises to the cytoplasm. It catalyses the reaction a 3'-end 3'-phospho-ribonucleotide-RNA + ATP = a 3'-end 2',3'-cyclophospho-ribonucleotide-RNA + AMP + diphosphate. Functionally, catalyzes the conversion of 3'-phosphate to a 2',3'-cyclic phosphodiester at the end of RNA. The mechanism of action of the enzyme occurs in 3 steps: (A) adenylation of the enzyme by ATP; (B) transfer of adenylate to an RNA-N3'P to produce RNA-N3'PP5'A; (C) and attack of the adjacent 2'-hydroxyl on the 3'-phosphorus in the diester linkage to produce the cyclic end product. The biological role of this enzyme is unknown but it is likely to function in some aspects of cellular RNA processing. The polypeptide is RNA 3'-terminal phosphate cyclase (Salmonella enteritidis PT4 (strain P125109)).